The chain runs to 334 residues: Galactinol synthase 3 (334 aa).

K97 is an active-site residue. Positions 113, 115, and 251 each coordinate Mn(2+).

It belongs to the glycosyltransferase 8 family. Galactosyltransferase subfamily. It depends on a divalent metal cation as a cofactor.

It is found in the cytoplasm. It catalyses the reaction myo-inositol + UDP-alpha-D-galactose = alpha-D-galactosyl-(1-&gt;3)-1D-myo-inositol + UDP + H(+). In terms of biological role, galactinol synthase involved in the biosynthesis of raffinose family oligosaccharides (RFOs) that function as osmoprotectants. May promote plant stress tolerance. The chain is Galactinol synthase 3 (GOLS3) from Arabidopsis thaliana (Mouse-ear cress).